The chain runs to 230 residues: Glutathione S-transferase 2 (230 aa).

Residues 2–86 form the GST N-terminal domain; that stretch reads AHFTLYSHAG…YLADKYDTDR (85 aa). The 138-residue stretch at 93–230 folds into the GST C-terminal domain; the sequence is DDPEYYKLIQ…EELAKAKEQH (138 aa).

It belongs to the GST superfamily.

It carries out the reaction RX + glutathione = an S-substituted glutathione + a halide anion + H(+). Functionally, involved in the oxidative stress response and detoxification. This is Glutathione S-transferase 2 (gst2) from Schizosaccharomyces pombe (strain 972 / ATCC 24843) (Fission yeast).